The chain runs to 341 residues: tRNA N6-adenosine threonylcarbamoyltransferase (341 aa).

2 residues coordinate Fe cation: His115 and His119. Residues 137–141 (IVSGG), Asp170, Gly183, Asp187, and Asn276 contribute to the substrate site. Residue Asp304 participates in Fe cation binding.

Belongs to the KAE1 / TsaD family. It depends on Fe(2+) as a cofactor.

It is found in the cytoplasm. The catalysed reaction is L-threonylcarbamoyladenylate + adenosine(37) in tRNA = N(6)-L-threonylcarbamoyladenosine(37) in tRNA + AMP + H(+). Its function is as follows. Required for the formation of a threonylcarbamoyl group on adenosine at position 37 (t(6)A37) in tRNAs that read codons beginning with adenine. Is involved in the transfer of the threonylcarbamoyl moiety of threonylcarbamoyl-AMP (TC-AMP) to the N6 group of A37, together with TsaE and TsaB. TsaD likely plays a direct catalytic role in this reaction. In Staphylococcus aureus (strain USA300), this protein is tRNA N6-adenosine threonylcarbamoyltransferase.